The sequence spans 766 residues: BMP/retinoic acid-inducible neural-specific protein 3 (766 aa).

The signal sequence occupies residues 1–33 (MIWRRRAGAELSSLMALWEWIVLSLHCWVLAVA). Positions 74-264 (RYKIYREFGR…FVQAALSYIA (191 aa)) constitute an MACPF domain. Residues Asn-168, Asn-337, Asn-456, Asn-562, Asn-609, and Asn-641 are each glycosylated (N-linked (GlcNAc...) asparagine).

This sequence belongs to the BRINP family. Expressed in the brain. Weakly expressed in embryonic stem (ES) cells. Expressed in ES-derived neural stem cells (NSCs) and neuronal cells.

Its subcellular location is the secreted. It is found in the mitochondrion. Functionally, inhibits neuronal cell proliferation by negative regulation of the cell cycle transition. Promotes pituitary gonadotrope cell proliferation, migration and invasion, when overexpressed. May play a role in cell pituitary tumor development. The polypeptide is BMP/retinoic acid-inducible neural-specific protein 3 (Brinp3) (Mus musculus (Mouse)).